The following is a 440-amino-acid chain: Xylose isomerase (440 aa).

Active-site residues include H101 and D104. Mg(2+) contacts are provided by E232, E268, H271, D296, D307, D309, and D339.

The protein belongs to the xylose isomerase family. Homotetramer. The cofactor is Mg(2+).

It is found in the cytoplasm. It carries out the reaction alpha-D-xylose = alpha-D-xylulofuranose. The chain is Xylose isomerase from Escherichia coli (strain SMS-3-5 / SECEC).